The chain runs to 194 residues: MSPQGPGTAVDVDDEVVLLDPDRRPCGTAPRLAVHGLDTPLHLAFSSYLFDAAGRLLVTRRALGKRTWPGVWTNSCCGHPRPGEDIALAVERRVDQELRLALTDLHCALPDFAYRATAADGLVENEVCPVYVARAVGDPDPDPAEVVEWRWVDWESYRQAALAAPWALSPWSVDQMTAFGQAAHPLTAALRAVG.

Positions 35 and 42 each coordinate Mn(2+). Positions 40–174 (PLHLAFSSYL…PWALSPWSVD (135 aa)) constitute a Nudix hydrolase domain. The active site involves Cys-77. Residue His-79 participates in Mn(2+) binding. Glu-97 is a binding site for Mg(2+). Mn(2+) is bound by residues Glu-124 and Glu-126. Glu-126 is a catalytic residue.

It belongs to the IPP isomerase type 1 family. The cofactor is Mg(2+). Requires Mn(2+) as cofactor.

The protein resides in the cytoplasm. The enzyme catalyses isopentenyl diphosphate = dimethylallyl diphosphate. The protein operates within isoprenoid biosynthesis; dimethylallyl diphosphate biosynthesis; dimethylallyl diphosphate from isopentenyl diphosphate: step 1/1. Its function is as follows. Catalyzes the 1,3-allylic rearrangement of the homoallylic substrate isopentenyl (IPP) to its highly electrophilic allylic isomer, dimethylallyl diphosphate (DMAPP). The protein is Isopentenyl-diphosphate Delta-isomerase of Frankia alni (strain DSM 45986 / CECT 9034 / ACN14a).